A 326-amino-acid polypeptide reads, in one-letter code: Mitochondrial glycine transporter (326 aa).

Solcar repeat units follow at residues 22 to 106 (SKTT…LRTS), 135 to 216 (SANL…LKRY), and 228 to 312 (SSSS…LILR). 6 helical membrane-spanning segments follow: residues 28 to 53 (FGAG…TRVQ), 81 to 107 (GTLP…RTSL), 138 to 163 (LATG…VRYE), 191 to 214 (GFGA…EQLK), 232 to 258 (INFV…KTRL), and 287 to 305 (GLGL…AWTV).

The protein belongs to the mitochondrial carrier (TC 2.A.29) family. SLC25A38 subfamily.

The protein resides in the mitochondrion inner membrane. The catalysed reaction is glycine(in) = glycine(out). Mitochondrial glycine transporter that imports glycine into the mitochondrial matrix. Plays an important role in providing glycine for the first enzymatic step in heme biosynthesis, the condensation of glycine with succinyl-CoA to produce 5-aminolevulinate (ALA) in the mitochondrial matrix. This Emericella nidulans (strain FGSC A4 / ATCC 38163 / CBS 112.46 / NRRL 194 / M139) (Aspergillus nidulans) protein is Mitochondrial glycine transporter.